We begin with the raw amino-acid sequence, 206 residues long: Small ribosomal subunit protein eS1 (206 aa).

Belongs to the eukaryotic ribosomal protein eS1 family.

This Methanocorpusculum labreanum (strain ATCC 43576 / DSM 4855 / Z) protein is Small ribosomal subunit protein eS1.